The following is a 936-amino-acid chain: E3 ubiquitin-protein ligase ZNRF3 (936 aa).

The tract at residues 1–31 (MRPRSGGRPGATGRRRRRLRRRPRGLRCSRL) is disordered. An N-terminal signal peptide occupies residues 1-55 (MRPRSGGRPGATGRRRRRLRRRPRGLRCSRLPPPPPLPLLLGLLLAAAGPGAARA). A compositionally biased stretch (basic residues) spans 13-27 (GRRRRRLRRRPRGLR). Residues 56-219 (KETAFVEVVL…PRQPTEYFDM (164 aa)) are Extracellular-facing. A helical transmembrane segment spans residues 220-240 (GIFLAFFVVVSLVCLILLVKI). Residues 241–936 (KLKQRRSQNS…HSADSSSPGA (696 aa)) are Cytoplasmic-facing. Residues 293–334 (CAICLEKYIDGEELRVIPCTHRFHRKCVDPWLLQHHTCPHCR) form an RING-type; atypical zinc finger. Disordered stretches follow at residues 608 to 693 (SEAG…SPGA), 739 to 758 (LYEG…SQGL), 849 to 875 (THSL…ATRE), and 892 to 936 (CPPE…SPGA). The segment covering 654–684 (SGDQVSTCSLEMNYSSNSSLEHRGPNSSTSE) has biased composition (polar residues). The segment covering 913-922 (ESSTTATEAA) has biased composition (low complexity).

This sequence belongs to the ZNRF3 family. As to quaternary structure, interacts with LRP6, FZD4, FZD5, FZD6 and FZD8. Interacts with RSPO1; interaction promotes indirect interaction with LGR4 and membrane clearance of ZNRF3. Also interacts with RSPO2. Interacts with LMBR1L.

Its subcellular location is the cell membrane. The catalysed reaction is S-ubiquitinyl-[E2 ubiquitin-conjugating enzyme]-L-cysteine + [acceptor protein]-L-lysine = [E2 ubiquitin-conjugating enzyme]-L-cysteine + N(6)-ubiquitinyl-[acceptor protein]-L-lysine.. Its pathway is protein modification; protein ubiquitination. Its activity is regulated as follows. Negatively regulated by R-spondin proteins such as RSPO1: interaction with RSPO1 induces the indirect association between ZNRF3 and LGR4, promoting membrane clearance of ZNRF3. Its function is as follows. E3 ubiquitin-protein ligase that acts as a negative regulator of the Wnt signaling pathway by mediating the ubiquitination and subsequent degradation of Wnt receptor complex components Frizzled and LRP6. Acts on both canonical and non-canonical Wnt signaling pathway. Acts as a tumor suppressor in the intestinal stem cell zone by inhibiting the Wnt signaling pathway, thereby restricting the size of the intestinal stem cell zone. Along with RSPO2 and RNF43, constitutes a master switch that governs limb specification. The polypeptide is E3 ubiquitin-protein ligase ZNRF3 (ZNRF3) (Homo sapiens (Human)).